A 397-amino-acid polypeptide reads, in one-letter code: Serine/threonine-protein kinase 17A (397 aa).

Residues 1-23 are disordered; the sequence is MIPLEKPGSGGSPSAAASGSGPG. At serine 9 the chain carries Phosphoserine. The region spanning 44–304 is the Protein kinase domain; the sequence is LSPGRELGRG…AEECLKHPWL (261 aa). Residues 50–58 and lysine 73 each bind ATP; that span reads LGRGKFAVV. The Proton acceptor role is filled by aspartate 169.

This sequence belongs to the protein kinase superfamily. CAMK Ser/Thr protein kinase family. DAP kinase subfamily. Post-translationally, autophosphorylated. In terms of tissue distribution, highly expressed in bone marrow. Lower levels in brain, heart, lung, liver and kidney.

It is found in the nucleus. It carries out the reaction L-seryl-[protein] + ATP = O-phospho-L-seryl-[protein] + ADP + H(+). It catalyses the reaction L-threonyl-[protein] + ATP = O-phospho-L-threonyl-[protein] + ADP + H(+). Its activity is regulated as follows. Inhibited by thiazolidinedione-type compounds: inhibited by furan- and pyridone- thiazolidinediones. Functionally, acts as a positive regulator of apoptosis. May also act as a regulator of cellular reactive oxygen species. The polypeptide is Serine/threonine-protein kinase 17A (STK17A) (Oryctolagus cuniculus (Rabbit)).